We begin with the raw amino-acid sequence, 220 residues long: Guanylate kinase (220 aa).

A Guanylate kinase-like domain is found at 16–195 (GLMFVLSSPS…AFESVKAILR (180 aa)). Position 23–30 (23–30 (SPSGAGKT)) interacts with ATP.

This sequence belongs to the guanylate kinase family.

The protein localises to the cytoplasm. It catalyses the reaction GMP + ATP = GDP + ADP. Its function is as follows. Essential for recycling GMP and indirectly, cGMP. The chain is Guanylate kinase from Rhodopseudomonas palustris (strain HaA2).